Reading from the N-terminus, the 489-residue chain is Argininosuccinate lyase (489 aa).

The interval 1 to 20 is disordered; the sequence is MSEPSAAVGQRPGGESAPAH.

It belongs to the lyase 1 family. Argininosuccinate lyase subfamily.

Its subcellular location is the cytoplasm. It catalyses the reaction 2-(N(omega)-L-arginino)succinate = fumarate + L-arginine. It functions in the pathway amino-acid biosynthesis; L-arginine biosynthesis; L-arginine from L-ornithine and carbamoyl phosphate: step 3/3. The sequence is that of Argininosuccinate lyase from Acidothermus cellulolyticus (strain ATCC 43068 / DSM 8971 / 11B).